Reading from the N-terminus, the 612-residue chain is U-box domain-containing protein 11 (612 aa).

Positions 127-196 (DEVGEQVELA…LHFGEEEEKQ (70 aa)) form a coiled coil. The U-box domain occupies 240–314 (TIPVDFLCPV…SRWCAEHNIE (75 aa)). 5 ARM repeats span residues 363 to 402 (TDNR…NLSI), 404 to 443 (ENNK…SLSL), 445 to 484 (DENK…NLCI), 486 to 526 (HGNK…VLAN), and 528 to 567 (QDAK…SLCK).

It catalyses the reaction S-ubiquitinyl-[E2 ubiquitin-conjugating enzyme]-L-cysteine + [acceptor protein]-L-lysine = [E2 ubiquitin-conjugating enzyme]-L-cysteine + N(6)-ubiquitinyl-[acceptor protein]-L-lysine.. It functions in the pathway protein modification; protein ubiquitination. Its function is as follows. Functions as an E3 ubiquitin ligase. The sequence is that of U-box domain-containing protein 11 (PUB11) from Arabidopsis thaliana (Mouse-ear cress).